A 373-amino-acid chain; its full sequence is MKSKNTPLYETCLNEGARMVEFAGWNMPIQFSGLINEHNAVRKNSGIFDISHMGVFSIQGKNPKDALQTLVPSDLHRIGPGEACYTVLLNNDGGIIDDLIVYDLGTNDPNNEECILIVINAGCTQADIDWIKEHLSDKNLKVCNAKGDGVLLALQGPDSTNQLRNVLGESLTNIPKFGHREIQVQLKTHPVSFSIFIARTGYTGEDGYEILLNTNAGKSLWRELIENGVTPCGLGARDTLRLEAGMPLYGNDINNTTTPFEAGLGWLVHLETPDEFIGKAALVKQTNEGINKKLVALKIEGRAIARKGYQIMFKNKFVGEITSGSWSPTLNEGIALAYLPIDLTKIGTAVSVQIRDKLHTAIVAKKPFYRRVS.

This sequence belongs to the GcvT family. As to quaternary structure, the glycine cleavage system is composed of four proteins: P, T, L and H.

It carries out the reaction N(6)-[(R)-S(8)-aminomethyldihydrolipoyl]-L-lysyl-[protein] + (6S)-5,6,7,8-tetrahydrofolate = N(6)-[(R)-dihydrolipoyl]-L-lysyl-[protein] + (6R)-5,10-methylene-5,6,7,8-tetrahydrofolate + NH4(+). The glycine cleavage system catalyzes the degradation of glycine. The polypeptide is Aminomethyltransferase (Prochlorococcus marinus (strain SARG / CCMP1375 / SS120)).